We begin with the raw amino-acid sequence, 434 residues long: MKHSKKIIFALLALAMSNTSMAAPMPLDRVSVQINDGIILESEITNMVSTVKANAKAANQTLPSDDALRTQVIERLILTHLQMQMAERIGLQIGDLQLDQTIENIAKEQKVTVAQMQQTIESEGTSFSQYREQLRQEVTLGEIQRIQVQRRIQVSPQEISGLVKLIQEQGLKDVEFQIGHILIEVPSNPTSEQLEGASRRAEIVLKRLNNGDDFRSTAIASSSGPKALEGGIWDFMNINEMPTLFAEVISNAKKGDIIGPIKSGSGFHIIKVVDTRGLQTQEVEEVKSRHILLKPSPILSEDRAKAMLANFLAQVRAGDADFAKLATQYSEDPGSAAKGGELGWADPSMYVPEFTQTLASLQEGQYSEPFRTTHGWHVVQLESRRKTDATEQFNSNRAHQLIFRRKFNEELQNWLDEMRSEAYIEIVEPESKRG.

Residues 1 to 22 (MKHSKKIIFALLALAMSNTSMA) form the signal peptide. 2 consecutive PpiC domains span residues 173–274 (DVEF…KVVD) and 283–383 (VEEV…QLES).

It localises to the periplasm. The enzyme catalyses [protein]-peptidylproline (omega=180) = [protein]-peptidylproline (omega=0). Chaperone involved in the correct folding and assembly of outer membrane proteins. Recognizes specific patterns of aromatic residues and the orientation of their side chains, which are found more frequently in integral outer membrane proteins. May act in both early periplasmic and late outer membrane-associated steps of protein maturation. This chain is Chaperone SurA, found in Shewanella frigidimarina (strain NCIMB 400).